A 193-amino-acid polypeptide reads, in one-letter code: ECF RNA polymerase sigma factor SigK (193 aa).

A sigma-70 factor domain-2 region spans residues L35–E101. The short motif at E59–Q62 is the Polymerase core binding element. The interval M140–K187 is sigma-70 factor domain-4. The H-T-H motif DNA-binding region spans Y161–R180.

Belongs to the sigma-70 factor family. ECF subfamily. Interacts transiently with the RNA polymerase catalytic core formed by RpoA, RpoB, RpoC and RpoZ (2 alpha, 1 beta, 1 beta' and 1 omega subunit) to form the RNA polymerase holoenzyme that can initiate transcription. Interacts (via sigma-70 factor domain 4) with anti-sigma-K factor RskA.

Its function is as follows. Sigma factors are initiation factors that promote the attachment of RNA polymerase to specific initiation sites and are then released. Extracytoplasmic function (ECF) sigma factors are held in an inactive form by an anti-sigma factor until released by regulated intramembrane proteolysis. This chain is ECF RNA polymerase sigma factor SigK (sigK), found in Mycobacterium sp. (strain JLS).